Consider the following 212-residue polypeptide: 3-oxo-tetronate 4-phosphate decarboxylase (212 aa).

Glutamate 79 functions as the Proton acceptor in the catalytic mechanism. 3 residues coordinate Zn(2+): glutamate 79, histidine 98, and histidine 100. Tyrosine 125 functions as the Proton donor in the catalytic mechanism. Histidine 165 is a Zn(2+) binding site.

It belongs to the aldolase class II family. AraD/FucA subfamily. Zn(2+) is required as a cofactor.

The enzyme catalyses 3-dehydro-4-O-phospho-D-erythronate + H(+) = dihydroxyacetone phosphate + CO2. The catalysed reaction is 3-dehydro-4-O-phospho-L-erythronate + H(+) = dihydroxyacetone phosphate + CO2. In terms of biological role, catalyzes the decarboxylation of 3-oxo-tetronate 4-phosphate to dihydroxyacetone phosphate (DHAP) and CO(2). The protein is 3-oxo-tetronate 4-phosphate decarboxylase of Escherichia coli (strain K12).